A 561-amino-acid chain; its full sequence is MAKIKFFALGGQDERGKNCYVLEIDNDVFIFNVGSLTPTTAVLGVKKIIPDFSWIQENQARVKGIFIGNAITENLGSLEFLFHTVGFFPIYTSSIGASIIKSKINENKLNIARDKLEIHELKPLETIEISNHSITPFKVSSSLPSSFGFALNTDNGYIVFIDDFIVLNDKNIAFENQLNQIIPKLSDNTLLLITGVGLVGRNSGFTTPKHKSLEQLNRIITPAKGRIFVACYDSNAYSVMTLAQIARMQNRPFIIYSQSFVHLFNTIVRQKLFNNTHLNTISIEEINNSTNSIVVLTSPPDKLYAKLFKIGMNEDERIRYRKSDTFIFMTPKVAGYEEIEAQILDDIARNEVSYYNLGREILSIQASDEDMKFLVSSLKPKYIIPTGGLYRDFINFTMVLKQAGAEQNQILILFNGEVLTIENKKLDSKKNELKLNPKCVDSAGLQEIGASIMFERDQMSESGVVIIIIYFDQKKSEFLNEITYSFLGVSLDVPEKDKLKTKMEELIKKQINDIKDFTTIKKRIGKEISKELKVSIKRAVMNLFTKMTSKAPLILSTIISI.

2 helical membrane-spanning segments follow: residues 29–49 and 80–100; these read FIFN…KKII and FLFH…ASII.

It is found in the cell membrane. This is an uncharacterized protein from Mycoplasma genitalium (strain ATCC 33530 / DSM 19775 / NCTC 10195 / G37) (Mycoplasmoides genitalium).